We begin with the raw amino-acid sequence, 180 residues long: Ribulose bisphosphate carboxylase small subunit, chloroplastic (180 aa).

The transit peptide at 1–57 (MVSSMMVSSAATFTRASPAQSSMVAPFTGLKSASAFPVTRKPNADLSHLPSNGGRVQ) directs the protein to the chloroplast.

The protein belongs to the RuBisCO small chain family. As to quaternary structure, heterohexadecamer of 8 large and 8 small subunits.

Its subcellular location is the plastid. The protein localises to the chloroplast. Functionally, ruBisCO catalyzes two reactions: the carboxylation of D-ribulose 1,5-bisphosphate, the primary event in carbon dioxide fixation, as well as the oxidative fragmentation of the pentose substrate. Both reactions occur simultaneously and in competition at the same active site. Although the small subunit is not catalytic it is essential for maximal activity. This is Ribulose bisphosphate carboxylase small subunit, chloroplastic from Musa acuminata (Banana).